The chain runs to 123 residues: Putative iron-sulfur cluster insertion protein ErpA (123 aa).

Cys51, Cys115, and Cys117 together coordinate iron-sulfur cluster.

The protein belongs to the HesB/IscA family. In terms of assembly, homodimer. Requires iron-sulfur cluster as cofactor.

In terms of biological role, required for insertion of 4Fe-4S clusters. This is Putative iron-sulfur cluster insertion protein ErpA from Bordetella avium (strain 197N).